Here is a 94-residue protein sequence, read N- to C-terminus: Large ribosomal subunit protein bL25 (94 aa).

This sequence belongs to the bacterial ribosomal protein bL25 family. As to quaternary structure, part of the 50S ribosomal subunit; part of the 5S rRNA/L5/L18/L25 subcomplex. Contacts the 5S rRNA. Binds to the 5S rRNA independently of L5 and L18.

Its function is as follows. This is one of the proteins that binds to the 5S RNA in the ribosome where it forms part of the central protuberance. This is Large ribosomal subunit protein bL25 from Edwardsiella ictaluri (strain 93-146).